The primary structure comprises 334 residues: Large ribosomal subunit protein uL3 (334 aa).

The span at 1–10 shows a compositional bias: basic residues; it reads MGMKKSRPRR. The interval 1-20 is disordered; it reads MGMKKSRPRRGSLAFSPRKR.

The protein belongs to the universal ribosomal protein uL3 family. Part of the 50S ribosomal subunit. Forms a cluster with proteins L14 and L24e.

One of the primary rRNA binding proteins, it binds directly near the 3'-end of the 23S rRNA, where it nucleates assembly of the 50S subunit. The chain is Large ribosomal subunit protein uL3 from Methanococcus maripaludis (strain C6 / ATCC BAA-1332).